Here is a 145-residue protein sequence, read N- to C-terminus: Major pollen allergen Ole e 1 (145 aa).

3 disulfides stabilise this stretch: cysteine 19–cysteine 90, cysteine 22–cysteine 131, and cysteine 43–cysteine 78. An N-linked (GlcNAc...) (complex) asparagine; alternate glycan is attached at asparagine 111. N-linked (GlcNAc...) (high mannose) asparagine; alternate glycosylation is present at asparagine 111.

The protein belongs to the Ole e I family. Post-translationally, N-glycosylated; contains high mannose (Man(7)-GlcNAc) and partially fucosylated complex glycans (GlcNAc-Man(3)-Xyl-GlcNAc). Complex glycans may contribute to the antigenicity. Exists both in a glycosylated and in a non-glycosylated form. Ole e 1 and Ole e 1.0103 are the only non-glycosylated isoallergens. In terms of processing, a second potential glycosylation site exists at position 50 in cv. Bella de Espana and cv. Hojiblanca. In terms of tissue distribution, expressed in tapetum and pollen grains. Not detected in petals, roots or leaves.

It localises to the endoplasmic reticulum. The protein localises to the secreted. Its function is as follows. May be involved in recognition between pollen-stigma and pollen tube-style cells. This Olea europaea (Common olive) protein is Major pollen allergen Ole e 1.